The sequence spans 557 residues: MSYNRRSKNITQGVARSPNRSMYYALGYQKDDFDKPMIGVANGHSTITPCNAGLQRLVDAAVSAVKQADANPQTFGTPTISDGMSMGTEGMKYSLVSREVIADCIETCVQGQWMDGVVVVGGCDKNMPGGMIALARINVPGIYVYGGTIRPGHWKGKDLTIVSAFEAVGEFTAGRMSQEDFEGVEKNACPTTGSCGGMYTANTMSSSFEALGMSLLYSSTMANPDQEKVDSAAESARVLVEAVKKDLKPRDIITKQAIENAVSVIMATGGSTNAVLHYLAIAHAAEIDWSIEDFERIRKRVPVICDLKPSGQYVATDLHAAGGIPQVMKLLLDAGLLHGDCMTITGRTIAEELKDVPSVPRADQKVIYPIDQALYKEGHLAILKGNLAEDGAVAKITGLKNPVITGPARVFDDEQSALAAILDDKIRAGDVVVLRYLGPQGGPGMPEMLAPTSAIIGKGLGESVGLITDGRFSGGTWGMVVGHVAPEAFVGGTIALVQEGDSITIDAHKLLLQLNVDDAELARRRAAWKQPAPRYTRGVLAKYAALARPANKGAVTG.

Residue C50 participates in [2Fe-2S] cluster binding. D82 lines the Mg(2+) pocket. Position 123 (C123) interacts with [2Fe-2S] cluster. Mg(2+)-binding residues include D124 and K125. K125 bears the N6-carboxylysine mark. C195 lines the [2Fe-2S] cluster pocket. E447 lines the Mg(2+) pocket. The Proton acceptor role is filled by S473.

This sequence belongs to the IlvD/Edd family. In terms of assembly, homodimer. The cofactor is [2Fe-2S] cluster. Mg(2+) is required as a cofactor.

It catalyses the reaction (2R)-2,3-dihydroxy-3-methylbutanoate = 3-methyl-2-oxobutanoate + H2O. It carries out the reaction (2R,3R)-2,3-dihydroxy-3-methylpentanoate = (S)-3-methyl-2-oxopentanoate + H2O. It functions in the pathway amino-acid biosynthesis; L-isoleucine biosynthesis; L-isoleucine from 2-oxobutanoate: step 3/4. It participates in amino-acid biosynthesis; L-valine biosynthesis; L-valine from pyruvate: step 3/4. Functionally, functions in the biosynthesis of branched-chain amino acids. Catalyzes the dehydration of (2R,3R)-2,3-dihydroxy-3-methylpentanoate (2,3-dihydroxy-3-methylvalerate) into 2-oxo-3-methylpentanoate (2-oxo-3-methylvalerate) and of (2R)-2,3-dihydroxy-3-methylbutanoate (2,3-dihydroxyisovalerate) into 2-oxo-3-methylbutanoate (2-oxoisovalerate), the penultimate precursor to L-isoleucine and L-valine, respectively. The protein is Dihydroxy-acid dehydratase of Burkholderia thailandensis (strain ATCC 700388 / DSM 13276 / CCUG 48851 / CIP 106301 / E264).